Here is a 152-residue protein sequence, read N- to C-terminus: Superoxide dismutase [Cu-Zn] (152 aa).

Histidine 45, histidine 47, and histidine 62 together coordinate Cu cation. Cysteine 56 and cysteine 145 are disulfide-bonded. Residues histidine 62, histidine 70, histidine 79, and aspartate 82 each contribute to the Zn(2+) site. Residue histidine 119 participates in Cu cation binding.

This sequence belongs to the Cu-Zn superoxide dismutase family. Homodimer. It depends on Cu cation as a cofactor. The cofactor is Zn(2+).

The protein resides in the cytoplasm. It carries out the reaction 2 superoxide + 2 H(+) = H2O2 + O2. Functionally, destroys radicals which are normally produced within the cells and which are toxic to biological systems. The protein is Superoxide dismutase [Cu-Zn] (SODCC) of Carica papaya (Papaya).